Here is a 464-residue protein sequence, read N- to C-terminus: Galactose-proton symporter (464 aa).

Over 1–15 (MPDAKKQGRSNKAMT) the chain is Cytoplasmic. The helical transmembrane segment at 16 to 36 (FFVCFLAALAGLLFGLDIGVI) threads the bilayer. Topologically, residues 37–56 (AGALPFIADEFQITSHTQEW) are periplasmic. A helical membrane pass occupies residues 57–77 (VVSSMMFGAAVGAVGSGWLSF). Residues 78–84 (KLGRKKS) are Cytoplasmic-facing. A helical transmembrane segment spans residues 85–105 (LMIGAILFVAGSLFSAAAPNV). Over 106–112 (EVLILSR) the chain is Periplasmic. The chain crosses the membrane as a helical span at residues 113-133 (VLLGLAVGVASYTAPLYLSEI). Residues 134–139 (APEKIR) are Cytoplasmic-facing. The helical transmembrane segment at 140-160 (GSMISMYQLMITIGILGAYLS) threads the bilayer. Residues 161-171 (DTAFSYTGAWR) are Periplasmic-facing. A helical transmembrane segment spans residues 172–192 (WMLGVIIIPAILLLIGVFFLP). Residues 193 to 250 (DSPRWFAAKRRFVDAERVLLRLRDTSAEAKRELDEIRESLQVKQSGWALFKENSNFRR) lie on the Cytoplasmic side of the membrane. The chain crosses the membrane as a helical span at residues 251–271 (AVFLGVLLQVMQQFTGMNVIM). At 272–290 (YYAPKIFELAGYTNTTEQM) the chain is on the periplasmic side. The chain crosses the membrane as a helical span at residues 291-311 (WGTVIVGLTNVLATFIAIGLV). The Cytoplasmic portion of the chain corresponds to 312-321 (DRWGRKPTLT). Residues 322-342 (LGFLVMAAGMGVLGTMMHIGI) form a helical membrane-spanning segment. Residues 343-351 (HSPSAQYFA) are Periplasmic-facing. The chain crosses the membrane as a helical span at residues 352–372 (IAMLLMFIVGFAMSAGPLIWV). Residues 373–394 (LCSEIQPLKGRDFGITCSTATN) are Cytoplasmic-facing. A helical transmembrane segment spans residues 395-415 (WIANMIVGATFLTMLNTLGNA). A topological domain (periplasmic) is located at residue Asn-416. A helical transmembrane segment spans residues 417-437 (TFWVYAALNVLFILLTLWLVP). The Cytoplasmic segment spans residues 438-464 (ETKHVSLEHIERNLMKGRKLREIGAHD).

This sequence belongs to the major facilitator superfamily. Sugar transporter (TC 2.A.1.1) family.

The protein resides in the cell inner membrane. Uptake of galactose across the boundary membrane with the concomitant transport of protons into the cell (symport system). The polypeptide is Galactose-proton symporter (galP) (Escherichia coli O6:H1 (strain CFT073 / ATCC 700928 / UPEC)).